The sequence spans 391 residues: Multidrug resistance protein MdtL (391 aa).

Residues 1 to 3 (MSR) lie on the Cytoplasmic side of the membrane. The helical transmembrane segment at 4 to 24 (FLICSFALVLLYPAGIDMYLV) threads the bilayer. The Periplasmic segment spans residues 25-41 (GLPRIAADLNASEAQLH). A helical transmembrane segment spans residues 42–62 (IAFSVYLAGMAAAMLFAGKVA). Over 63–68 (DRSGRK) the chain is Cytoplasmic. A helical transmembrane segment spans residues 69–89 (PVAIPGAALFIIASVFCSLAE). The Periplasmic portion of the chain corresponds to 90–92 (TST). Residues 93–113 (LFLAGRFLQGLGAGCCYVVAF) form a helical membrane-spanning segment. Residues 114 to 130 (AILRDTLDDRRRAKVLS) are Cytoplasmic-facing. The helical transmembrane segment at 131–151 (LLNGITCIIPVLAPVLGHLIM) threads the bilayer. Over 152–157 (LKFPWQ) the chain is Periplasmic. A helical membrane pass occupies residues 158–178 (SLFWAMAMMGIAVLMLSLFIL). Residues 179–202 (KETRPASPAASDKPRENSESLLNR) are Cytoplasmic-facing. Residues 203-222 (FFLSRVVITTLSVSVILTFV) traverse the membrane as a helical segment. Residues 223–244 (NTSPVLLMEIMGFERGEYATIM) lie on the Periplasmic side of the membrane. Residues 245-265 (ALTAGVSMTFSFSTPFALGIF) traverse the membrane as a helical segment. The Cytoplasmic segment spans residues 266-268 (KPR). Residues 269–289 (TLMITSQVLFLAAGITLAVSP) traverse the membrane as a helical segment. At 290-292 (SHA) the chain is on the periplasmic side. Residues 293–313 (VSLFGITLICAGFSVGFGVAM) form a helical membrane-spanning segment. At 314–330 (SQALGPFSLRAGVASST) the chain is on the cytoplasmic side. The chain crosses the membrane as a helical span at residues 331 to 351 (LGIAQVCGSSLWIWLAAVVGI). The Periplasmic portion of the chain corresponds to 352–355 (GAWN). Residues 356 to 376 (MLIGILIACSIVSLLLIMFVA) form a helical membrane-spanning segment. The Cytoplasmic portion of the chain corresponds to 377–391 (PGRPVAAHEEIHHHA).

This sequence belongs to the major facilitator superfamily. DHA1 family. MdtL (TC 2.A.1.2.22) subfamily.

Its subcellular location is the cell inner membrane. In Shigella flexneri, this protein is Multidrug resistance protein MdtL (mdtL).